A 248-amino-acid polypeptide reads, in one-letter code: PF03932 family protein CutC (248 aa).

Belongs to the CutC family. Homodimer.

It localises to the cytoplasm. The sequence is that of PF03932 family protein CutC from Escherichia coli O127:H6 (strain E2348/69 / EPEC).